A 112-amino-acid polypeptide reads, in one-letter code: MCGDCVEKEYPNRGTTCLENGSFLLNFAGCAVCSKRDFMLITNRSLKEEDGEEIVTYDHLCKNCHHVVARHEYTFSIMDEFQEYTMLCLLCGKAEDTISILPDDPRQMTLLF.

11 residues coordinate Zn(2+): Cys-2, Cys-5, Cys-30, Cys-33, His-59, Cys-61, Cys-64, His-66, His-71, Cys-88, and Cys-91.

It belongs to the Churchill family.

Functionally, transcriptional activator that mediates FGF signaling during neural development. Plays a role in the regulation of cell movement. Does not bind DNA by itself. The chain is Protein Churchill (Churc1) from Mus musculus (Mouse).